The primary structure comprises 322 residues: UDP-galactose transporter homolog 1 (322 aa).

Transmembrane regions (helical) follow at residues 4-24 (FMRQ…SWAV), 43-63 (ALLS…WNWF), 76-96 (FLGY…FGYA), 105-125 (TVIL…VFVY), and 129-149 (FPPH…IFSY). N-linked (GlcNAc...) asparagine glycosylation occurs at asparagine 152. A run of 4 helical transmembrane segments spans residues 164–184 (SPIG…TNTT), 199–219 (MMIA…ISPF), 250–270 (LFIF…ITLT), and 290–310 (IQWL…GLKI). N-linked (GlcNAc...) asparagine glycosylation is found at asparagine 313 and asparagine 314.

The protein belongs to the nucleotide-sugar transporter family. SLC35B subfamily.

The protein resides in the endoplasmic reticulum membrane. Its function is as follows. May be involved in specific transport of UDP-Gal from the cytosol to the Golgi lumen. Involved in the maintenance of optimal conditions for the folding of secretory pathway proteins in the endoplasmic reticulum. The chain is UDP-galactose transporter homolog 1 (hut1) from Schizosaccharomyces pombe (strain 972 / ATCC 24843) (Fission yeast).